The primary structure comprises 246 residues: Lipoprotein-releasing system ATP-binding protein LolD 1 (246 aa).

The ABC transporter domain maps to 6-244 (LKLERIRKDL…ASVTNEAASL (239 aa)). Residue 43 to 50 (GPSGSGKS) participates in ATP binding.

This sequence belongs to the ABC transporter superfamily. Lipoprotein translocase (TC 3.A.1.125) family. As to quaternary structure, the complex is composed of two ATP-binding proteins (LolD) and two transmembrane proteins (LolC and LolE).

It localises to the cell inner membrane. Its function is as follows. Part of the ABC transporter complex LolCDE involved in the translocation of mature outer membrane-directed lipoproteins, from the inner membrane to the periplasmic chaperone, LolA. Responsible for the formation of the LolA-lipoprotein complex in an ATP-dependent manner. The chain is Lipoprotein-releasing system ATP-binding protein LolD 1 from Chlorobium chlorochromatii (strain CaD3).